A 578-amino-acid chain; its full sequence is Dapdiamide synthesis protein DdaD (578 aa).

Positions E498–S573 constitute a Carrier domain. S533 carries the post-translational modification O-(pantetheine 4'-phosphoryl)serine.

Belongs to the ATP-dependent AMP-binding enzyme family. Pantetheine 4'-phosphate serves as cofactor.

Its pathway is antibiotic biosynthesis. Functionally, involved in dapdiamide antibiotics biosynthesis. Activates and sequesters N-beta-fumaramoyl-DAP as a covalently tethered thioester for subsequent oxidative modification of the fumaramoyl group. The sequence is that of Dapdiamide synthesis protein DdaD from Enterobacter agglomerans (Erwinia herbicola).